The chain runs to 254 residues: Phosphomannomutase (254 aa).

Residue aspartate 19 is the Nucleophile of the active site. Residues aspartate 19 and aspartate 21 each coordinate Mg(2+). Aspartate 21 acts as the Proton donor/acceptor in catalysis. Alpha-D-mannose 1-phosphate is bound by residues arginine 28, arginine 130, arginine 141, arginine 148, serine 186, and aspartate 188. Aspartate 216, phenylalanine 228, aspartate 230, and threonine 233 together coordinate Mg(2+). Residue serine 240 is modified to Phosphoserine.

The protein belongs to the eukaryotic PMM family. In terms of assembly, homodimer.

It localises to the cytoplasm. It carries out the reaction alpha-D-mannose 1-phosphate = D-mannose 6-phosphate. The protein operates within nucleotide-sugar biosynthesis; GDP-alpha-D-mannose biosynthesis; alpha-D-mannose 1-phosphate from D-fructose 6-phosphate: step 2/2. Its function is as follows. Involved in the synthesis of the GDP-mannose and dolichol-phosphate-mannose required for a number of critical mannosyl transfer reactions such as folding and glycosylation of secretory proteins in the ER lumen. The chain is Phosphomannomutase from Saccharomyces cerevisiae (strain ATCC 204508 / S288c) (Baker's yeast).